We begin with the raw amino-acid sequence, 310 residues long: MSTSSYIDQIKNEISEKVKGRAIIAVSGGQDSSLLSVLASQVLGDRLLCVFVDTGLIRIGEVDRVRKFFEEHAMNYRIVDASKRFLEALKGITDPEEKRKIIGKMFIDVLNEEAENFHAEYLLQGTIAPDWIESGGQKRDTIKSHHNVGGLPKEMKLKLVEPLRDFYKDEIRAMSRELGLRTDLQPFPGPGLAVRIVGEITPEKLDLLRRATRIVEDKIESALKPEERPWQYFAVLLPVKTTGVHGDRRAYGYTVAVRMIDSIDAMTGTFTKPSWDLLEDIANTITDEIPDINRVVYDITNKPPATIEWE.

One can recognise a GMPS ATP-PPase domain in the interval 1-187; that stretch reads MSTSSYIDQI…LGLRTDLQPF (187 aa). Residue 27–33 participates in ATP binding; it reads SGGQDSS.

As to quaternary structure, heterodimer composed of a glutamine amidotransferase subunit (A) and a GMP-binding subunit (B).

It carries out the reaction XMP + L-glutamine + ATP + H2O = GMP + L-glutamate + AMP + diphosphate + 2 H(+). The protein operates within purine metabolism; GMP biosynthesis; GMP from XMP (L-Gln route): step 1/1. Functionally, catalyzes the synthesis of GMP from XMP. This Thermoplasma acidophilum (strain ATCC 25905 / DSM 1728 / JCM 9062 / NBRC 15155 / AMRC-C165) protein is GMP synthase [glutamine-hydrolyzing] subunit B (guaAB).